The sequence spans 1395 residues: G2/mitotic-specific cyclin-B3 (1395 aa).

Residues Met-1–Lys-59 are disordered. Residues Ser-10–Val-23 are compositionally biased toward low complexity. Positions Ser-25–Gly-34 are enriched in basic and acidic residues. Residues Ser-42–Gln-54 show a composition bias toward low complexity. The short motif at Arg-60–Asn-68 is the D-box element. Disordered stretches follow at residues Leu-418–Glu-464 and Ala-1074–Asp-1122. Positions Ser-419–Phe-431 are enriched in basic and acidic residues. Low complexity predominate over residues Ser-1082–Ser-1093.

It belongs to the cyclin family. Cyclin AB subfamily. As to quaternary structure, interacts with CDK2 kinase. Ubiquitinated. Ubiquitination leads to its degradation during anaphase entry, after degradation of CCNB1. Testis specific. In testis, it is expressed in developing germ cells, but not in Leydig cells. Weakly or not expressed in other tissues.

The protein localises to the nucleus. Functionally, cyclins are positive regulatory subunits of the cyclin-dependent kinases (CDKs), and thereby play an essential role in the control of the cell cycle, notably via their destruction during cell division. Its tissue specificity suggest that it may be required during early meiotic prophase I. The protein is G2/mitotic-specific cyclin-B3 (CCNB3) of Homo sapiens (Human).